A 61-amino-acid polypeptide reads, in one-letter code: Metallothionein-2A (61 aa).

An N-acetylmethionine modification is found at methionine 1. Residues 1-29 (MDPNCSCAAGGSCTCAGSCKCKDCKCTSC) form a beta region. The a divalent metal cation site is built by cysteine 5, cysteine 7, cysteine 13, cysteine 15, cysteine 19, cysteine 21, cysteine 24, cysteine 26, cysteine 29, cysteine 33, cysteine 34, cysteine 36, cysteine 37, cysteine 41, cysteine 44, cysteine 48, cysteine 50, and cysteine 57. Positions 30 to 61 (KKSCCSCCPVGCAKCAQGCICKGASDKCSCCA) are alpha. Residue serine 58 is modified to Phosphoserine. A divalent metal cation is bound by residues cysteine 59 and cysteine 60.

It belongs to the metallothionein superfamily. Type 1 family. In terms of assembly, interacts with EOLA1.

Metallothioneins have a high content of cysteine residues that bind various heavy metals; these proteins are transcriptionally regulated by both heavy metals and glucocorticoids. This chain is Metallothionein-2A (MT2A), found in Sus scrofa (Pig).